The primary structure comprises 512 residues: Sodium/proline symporter (512 aa).

13 helical membrane passes run 16 to 36, 54 to 74, 85 to 105, 139 to 159, 174 to 194, 200 to 220, 240 to 260, 286 to 306, 327 to 347, 381 to 401, 410 to 430, 438 to 458, and 467 to 487; these read WQTY…GFYG, IGPY…WMIM, LSAM…YFVV, IISG…GFVS, FGLI…GYLA, FFQG…AMMN, LFKG…LGYF, ISWM…GIAF, VLFH…AIMS, FVMI…AIAW, LVGN…LFAL, AGAV…IAWI, and IFGL…TYVV.

Belongs to the sodium:solute symporter (SSF) (TC 2.A.21) family.

The protein localises to the cell membrane. The enzyme catalyses L-proline(in) + Na(+)(in) = L-proline(out) + Na(+)(out). Functionally, catalyzes the sodium-dependent uptake of extracellular L-proline. Since most S.aureus strains are L-proline auxotrophs, this transporter may aid the bacterial persistence during an infection of tissues with low proline concentrations. This chain is Sodium/proline symporter (putP), found in Staphylococcus aureus (strain bovine RF122 / ET3-1).